The sequence spans 222 residues: Transmembrane reductase CYB561D2 (222 aa).

Topologically, residues 2 to 17 (ALSVETESHIYRALRT) are cytoplasmic. Residues 14 to 217 (ALRTASGAAA…NQVSNAYLYR (204 aa)) enclose the Cytochrome b561 domain. Residues 18–38 (ASGAAAHLVALGFTIFVAVLA) traverse the membrane as a helical segment. The Lumenal portion of the chain corresponds to 39–46 (RPGSSLFS). Residues 47-67 (WHPVLMSLAFSFLMTEALLMF) traverse the membrane as a helical segment. Heme b is bound at residue H48. Residues 68 to 85 (SPESSLLRSLSRKVRARC) lie on the Cytoplasmic side of the membrane. Positions 86 and 120 each coordinate heme b. Residues 86–106 (HWVLQLLALLCALLGLGLVIL) traverse the membrane as a helical segment. Residues 107 to 122 (HKEQLGKAHLTTRHGQ) are Lumenal-facing. The helical transmembrane segment at 123–143 (AGLLAVLWAGLQCSGGMGLLY) threads the bilayer. Residues 144 to 162 (PKLLPRWPLAKLKLYHATS) are Cytoplasmic-facing. H159 contributes to the heme b binding site. The helical transmembrane segment at 163-183 (GLVGYLLGSASLLLGMFSLWF) threads the bilayer. At 184 to 186 (TAT) the chain is on the lumenal side. The chain crosses the membrane as a helical span at residues 187–207 (VTGGAWYLAVLCPILTSLVIM). The Cytoplasmic segment spans residues 208 to 222 (NQVSNAYLYRKRIQP).

Requires heme b as cofactor. In terms of tissue distribution, highly expressed in the brain, lung, liver, and kidney. Moderately expressed in the heart, placenta, skeletal muscle, and pancreas.

It localises to the endoplasmic reticulum membrane. It is found in the cytoplasmic vesicle membrane. The catalysed reaction is monodehydro-L-ascorbate radical(out) + L-ascorbate(in) = monodehydro-L-ascorbate radical(in) + L-ascorbate(out). It carries out the reaction Fe(3+)(out) + L-ascorbate(in) = monodehydro-L-ascorbate radical(in) + Fe(2+)(out) + H(+). In terms of biological role, transmembrane reductase that may use ascorbate as an electron donor in the cytoplasm and transfer electrons across endoplasmic reticulum membranes to reduce monodehydro-L-ascorbate radical and iron cations Fe(3+) in the lumen of that compartment. The sequence is that of Transmembrane reductase CYB561D2 from Mus musculus (Mouse).